A 344-amino-acid polypeptide reads, in one-letter code: L-rhamnose-proton symporter (344 aa).

Helical transmembrane passes span 4–24, 38–58, 68–88, 101–121, 137–157, 175–195, 207–227, 255–275, 290–310, and 324–344; these read PILL…CFYA, WSLG…WWLL, FDMA…IGNI, MGIG…TPVL, TLLG…AGLL, LILA…MDAA, INAL…GAVV, LIAN…QFFF, ISWM…GLLF, and LVLG…GMAA.

Belongs to the L-rhamnose transporter (TC 2.A.7.6) family.

It is found in the cell inner membrane. The catalysed reaction is L-rhamnopyranose(in) + H(+)(in) = L-rhamnopyranose(out) + H(+)(out). Its function is as follows. Uptake of L-rhamnose across the cytoplasmic membrane with the concomitant transport of protons into the cell (symport system). This is L-rhamnose-proton symporter from Pectobacterium carotovorum subsp. carotovorum (strain PC1).